The sequence spans 166 residues: Large ribosomal subunit protein uL11 (166 aa).

Arg67 is modified (N5-methylarginine).

It belongs to the universal ribosomal protein uL11 family.

This is Large ribosomal subunit protein uL11 (RPL12) from Encephalitozoon cuniculi (strain GB-M1) (Microsporidian parasite).